We begin with the raw amino-acid sequence, 175 residues long: Ribosome maturation factor RimM (175 aa).

Residues 96-172 (PDTYYDHQLE…LIEIDPPDGL (77 aa)) enclose the PRC barrel domain.

Belongs to the RimM family. In terms of assembly, binds ribosomal protein uS19.

It localises to the cytoplasm. Functionally, an accessory protein needed during the final step in the assembly of 30S ribosomal subunit, possibly for assembly of the head region. Essential for efficient processing of 16S rRNA. May be needed both before and after RbfA during the maturation of 16S rRNA. It has affinity for free ribosomal 30S subunits but not for 70S ribosomes. The sequence is that of Ribosome maturation factor RimM from Mycolicibacterium paratuberculosis (strain ATCC BAA-968 / K-10) (Mycobacterium paratuberculosis).